The sequence spans 427 residues: Tyrosine--tRNA ligase (427 aa).

Position 33 (Tyr33) interacts with L-tyrosine. The short motif at 38–47 (PTASSLTIGN) is the 'HIGH' region element. 2 residues coordinate L-tyrosine: Tyr168 and Gln172. Residues 228–232 (KFGKS) carry the 'KMSKS' region motif. Lys231 contributes to the ATP binding site. Residues 361-427 (LDLLSTLTNS…KKNYYLLRFN (67 aa)) enclose the S4 RNA-binding domain.

Belongs to the class-I aminoacyl-tRNA synthetase family. TyrS type 1 subfamily. As to quaternary structure, homodimer.

It localises to the cytoplasm. It carries out the reaction tRNA(Tyr) + L-tyrosine + ATP = L-tyrosyl-tRNA(Tyr) + AMP + diphosphate + H(+). Catalyzes the attachment of tyrosine to tRNA(Tyr) in a two-step reaction: tyrosine is first activated by ATP to form Tyr-AMP and then transferred to the acceptor end of tRNA(Tyr). The chain is Tyrosine--tRNA ligase from Cytophaga hutchinsonii (strain ATCC 33406 / DSM 1761 / CIP 103989 / NBRC 15051 / NCIMB 9469 / D465).